The following is a 199-amino-acid chain: Transgelin-3 (199 aa).

The Calponin-homology (CH) domain occupies 24-136 (ADLENKLVDW…RTLMALGSVA (113 aa)). Ser-163 is modified (phosphoserine). The stretch at 174 to 199 (IGLQMGSNKGASQAGMTGYGMPRQIM) is one Calponin-like repeat. Polar residues predominate over residues 178-188 (MGSNKGASQAG). Residues 178–199 (MGSNKGASQAGMTGYGMPRQIM) form a disordered region.

Belongs to the calponin family.

This Bos taurus (Bovine) protein is Transgelin-3 (TAGLN3).